The sequence spans 716 residues: Polycystin-2 (716 aa).

Composition is skewed to basic and acidic residues over residues 1 to 10 (MNYGAADERW) and 30 to 41 (MVSEEYEHDKKK). Residues 1 to 44 (MNYGAADERWANPPQPVAAAEHGPSFDHSMVSEEYEHDKKKNPA) are disordered. At 1-72 (MNYGAADERW…SDGKIKLTAR (72 aa)) the chain is on the cytoplasmic side. A helical transmembrane segment spans residues 73–93 (SFMEVGGYAVFLIVLVYVAFA). Topologically, residues 94–324 (QNSIQSYYYS…YQTSGGTRMM (231 aa)) are extracellular. N-linked (GlcNAc...) asparagine glycosylation is found at Asn-150 and Asn-177. Cysteines 180 and 193 form a disulfide. A helical transmembrane segment spans residues 325–345 (IFEGIFCGFILYFIFEELFAI). The Cytoplasmic segment spans residues 346-355 (GRHRLHYLTQ). Residues 356 to 376 (FWNLVDVVLLGFSVATIILSV) traverse the membrane as a helical segment. Residue Asn-377 is glycosylated (N-linked (GlcNAc...) asparagine). Residues 377 to 409 (NRTKTGVNRVNSVIENGLTNAPFDDVTSSENSY) are Extracellular-facing. A helical membrane pass occupies residues 410–430 (LNIKACVVFVAWVKVFKFISV). Residues 431 to 447 (NKTMSQLSSTLTRSAKD) are Cytoplasmic-facing. A helical membrane pass occupies residues 448–468 (IGGFAVMFAVFFFAFAQFGYL). Residues 469-482 (CFGTQIADYSNLYN) are Extracellular-facing. An intramembrane region (pore-forming) is located at residues 483 to 497 (SAFALLRLILGDFNF). Over 498–510 (SALESCNRFFGPA) the chain is Extracellular. A helical transmembrane segment spans residues 511 to 531 (FFIAYVFFVSFILLNMFLAII). The Cytoplasmic portion of the chain corresponds to 532 to 716 (NDSYVEVKAE…ITSIADKKEE (185 aa)). Phosphoserine; by CK2 is present on Ser-534. Positions 613–680 (EKVAEDIADE…IEKQRVQQQD (68 aa)) form a coiled coil. Positions 696–716 (RNRESAARRPTITSIADKKEE) are disordered.

Belongs to the polycystin family. In terms of processing, phosphorylated. CK2 (kin-3 and kin-10) and calcineurin act antagonistically to regulate the phosphorylation state. As to expression, exclusively expressed in a subset of 3 categories of adult male sensory neurons: ray neurons, hook neurons and head cephalic (CEM) neurons. Expressed in the male tail.

It localises to the cell membrane. The protein localises to the cell projection. It is found in the cilium membrane. The protein resides in the cilium. Its subcellular location is the axon. It localises to the dendrite. The protein localises to the perikaryon. It is found in the endoplasmic reticulum membrane. In terms of biological role, functions as a calcium permeable cation channel. Required for 2 aspects of male mating behavior: response to hermaphrodite contact and vulva location. Acts in the same pathway as lov-1 and atp-2 in response behavior. This Caenorhabditis elegans protein is Polycystin-2.